The following is a 319-amino-acid chain: tRNA uridine(34) hydroxylase (319 aa).

In terms of domain architecture, Rhodanese spans 124-218 (LDEDTVILDA…YGKNEETKGE (95 aa)). The Cysteine persulfide intermediate role is filled by C178.

The protein belongs to the TrhO family.

It carries out the reaction uridine(34) in tRNA + AH2 + O2 = 5-hydroxyuridine(34) in tRNA + A + H2O. Functionally, catalyzes oxygen-dependent 5-hydroxyuridine (ho5U) modification at position 34 in tRNAs. This chain is tRNA uridine(34) hydroxylase, found in Listeria monocytogenes serotype 4a (strain HCC23).